Here is an 888-residue protein sequence, read N- to C-terminus: Bifunctional uridylyltransferase/uridylyl-removing enzyme (888 aa).

Residues M1 to E338 form a uridylyltransferase region. The disordered stretch occupies residues E182 to A204. The interval I339–V699 is uridylyl-removing. One can recognise an HD domain in the interval V457–L579. 2 ACT domains span residues Q700–Q781 and M809–Q887.

The protein belongs to the GlnD family. Requires Mg(2+) as cofactor.

The enzyme catalyses [protein-PII]-L-tyrosine + UTP = [protein-PII]-uridylyl-L-tyrosine + diphosphate. It carries out the reaction [protein-PII]-uridylyl-L-tyrosine + H2O = [protein-PII]-L-tyrosine + UMP + H(+). Its activity is regulated as follows. Uridylyltransferase (UTase) activity is inhibited by glutamine, while glutamine activates uridylyl-removing (UR) activity. Its function is as follows. Modifies, by uridylylation and deuridylylation, the PII regulatory proteins (GlnB and homologs), in response to the nitrogen status of the cell that GlnD senses through the glutamine level. Under low glutamine levels, catalyzes the conversion of the PII proteins and UTP to PII-UMP and PPi, while under higher glutamine levels, GlnD hydrolyzes PII-UMP to PII and UMP (deuridylylation). Thus, controls uridylylation state and activity of the PII proteins, and plays an important role in the regulation of nitrogen assimilation and metabolism. The polypeptide is Bifunctional uridylyltransferase/uridylyl-removing enzyme (Acinetobacter baylyi (strain ATCC 33305 / BD413 / ADP1)).